Consider the following 679-residue polypeptide: Sodium-dependent phosphate transporter 1 (679 aa).

6 consecutive transmembrane segments (helical) span residues 21–41 (YLWMLILGFIIAFVLAFSVGA), 62–82 (ACILASIFETVGSVLLGAKVS), 100–120 (GLLMAGSVSAMFGSAVWQLVA), 158–178 (IVMSWFVSPLLSGIMSGILFF), 203–223 (ACTVGINLFSIMYTGAPLLGF), and 230–250 (GTILISVGCAVFCALIVWFFV). A phosphoserine mark is found at serine 265 and serine 269. Positions 268 to 288 (ESPLMEKKNSLKEDHEETKLS) are disordered. A compositionally biased stretch (basic and acidic residues) spans 271-286 (LMEKKNSLKEDHEETK). 4 helical membrane-spanning segments follow: residues 511 to 531 (VSLLFQFLQILTACFGSFAHG), 558 to 578 (VATPIWLLLYGGVGICIGLWV), 600 to 620 (FSIELASALTVVIASNIGLPI), and 650 to 670 (IFMAWFVTVPISGVISAAIMA). Residues 550 to 558 (DTGDVSSKV) form an a region.

Belongs to the inorganic phosphate transporter (PiT) (TC 2.A.20) family.

It localises to the cell membrane. The catalysed reaction is 2 Na(+)(out) + phosphate(out) = 2 Na(+)(in) + phosphate(in). Its function is as follows. Sodium-phosphate symporter which preferentially transports the monovalent form of phosphate with a stoichiometry of two sodium ions per phosphate ion. May play a role in extracellular matrix and cartilage calcification as well as in vascular calcification. Essential for cell proliferation but this function is independent of its phosphate transporter activity. The sequence is that of Sodium-dependent phosphate transporter 1 (SLC20A1) from Pongo abelii (Sumatran orangutan).